The chain runs to 62 residues: Large ribosomal subunit protein uL29 (62 aa).

The protein belongs to the universal ribosomal protein uL29 family.

The polypeptide is Large ribosomal subunit protein uL29 (Geobacter sulfurreducens (strain ATCC 51573 / DSM 12127 / PCA)).